Reading from the N-terminus, the 244-residue chain is tRNA pseudouridine synthase A (244 aa).

Catalysis depends on Asp52, which acts as the Nucleophile. Substrate is bound at residue Tyr110.

It belongs to the tRNA pseudouridine synthase TruA family. Homodimer.

The enzyme catalyses uridine(38/39/40) in tRNA = pseudouridine(38/39/40) in tRNA. Formation of pseudouridine at positions 38, 39 and 40 in the anticodon stem and loop of transfer RNAs. In Geotalea daltonii (strain DSM 22248 / JCM 15807 / FRC-32) (Geobacter daltonii), this protein is tRNA pseudouridine synthase A.